The following is a 553-amino-acid chain: Transcription factor GAMYB (553 aa).

A compositionally biased stretch (basic and acidic residues) spans M1–Q17. A disordered region spans residues M1–W45. The span at S27–P38 shows a compositional bias: gly residues. 2 HTH myb-type domains span residues G37–L89 and R90–Q144. DNA-binding regions (H-T-H motif) lie at residues W65–L89 and W117–I140. The segment at P464–P488 is disordered.

It is found in the nucleus. Functionally, transcriptional activator of gibberellin-dependent alpha-amylase expression in aleurone cells. Involved in pollen and floral organs development. May bind to the 5'-TAACAAA-3' box of alpha-amylase promoter. This chain is Transcription factor GAMYB (GAM1), found in Oryza sativa subsp. indica (Rice).